The following is a 1381-amino-acid chain: Hepatocyte growth factor receptor (1381 aa).

A signal peptide spans 1 to 24; the sequence is MKAPAVLAPGILVLLFTLVQRSNG. The Extracellular portion of the chain corresponds to 25-934; it reads ECKEALTKSE…VQPDQNFTGL (910 aa). One can recognise a Sema domain in the interval 27-515; sequence KEALTKSEMN…TGKKITKIPL (489 aa). The N-linked (GlcNAc...) asparagine glycan is linked to asparagine 45. 4 disulfides stabilise this stretch: cysteine 95–cysteine 101, cysteine 98–cysteine 160, cysteine 133–cysteine 141, and cysteine 172–cysteine 175. N-linked (GlcNAc...) asparagine glycosylation occurs at asparagine 106. Asparagine 149 is a glycosylation site (N-linked (GlcNAc...) asparagine). Residue asparagine 202 is glycosylated (N-linked (GlcNAc...) asparagine). Intrachain disulfides connect cysteine 298–cysteine 363 and cysteine 385–cysteine 397. Residue asparagine 399 is glycosylated (N-linked (GlcNAc...) asparagine). Intrachain disulfides connect cysteine 520–cysteine 538, cysteine 526–cysteine 561, cysteine 529–cysteine 545, and cysteine 541–cysteine 551. IPT/TIG domains lie at 563–655, 657–739, and 742–836; these read PTIY…FSYV, PIIT…FSYR, and PIVY…LIYV. Threonine 582 is a glycosylation site (O-linked (Man) threonine). Asparagine 607 and asparagine 635 each carry an N-linked (GlcNAc...) asparagine glycan. O-linked (Man) threonine glycosylation is found at threonine 676 and threonine 761. 3 N-linked (GlcNAc...) asparagine glycosylation sites follow: asparagine 785, asparagine 879, and asparagine 930. A helical transmembrane segment spans residues 935 to 955; that stretch reads VAGVVSISIALLLLLGLFLWL. Residues 956-1381 are Cytoplasmic-facing; the sequence is KKKKQIKDLG…QDNTDGEVDT (426 aa). Serine 966 carries the post-translational modification Phosphoserine. Threonine 977 is modified (phosphothreonine). A phosphoserine mark is found at serine 990, serine 997, and serine 1000. Tyrosine 1003 carries the post-translational modification Phosphotyrosine. Residues 1078–1345 form the Protein kinase domain; sequence VHFNEVIGRG…RISAIFSTFI (268 aa). Residues 1084-1092 and lysine 1110 contribute to the ATP site; that span reads IGRGHFGCV. Aspartate 1204 functions as the Proton acceptor in the catalytic mechanism. Residues 1212-1381 are interaction with RANBP9; the sequence is LDEKFTVKVA…QDNTDGEVDT (170 aa). The residue at position 1230 (tyrosine 1230) is a Phosphotyrosine. 2 positions are modified to phosphotyrosine; by autocatalysis: tyrosine 1234 and tyrosine 1235. Threonine 1289 is modified (phosphothreonine). An interaction with MUC20 region spans residues 1320–1359; the sequence is WHPKAEMRPSFSELVSRISAIFSTFIGEHYVHVNATYVNV. 2 positions are modified to phosphotyrosine; by autocatalysis: tyrosine 1349 and tyrosine 1356. Phosphotyrosine is present on tyrosine 1365.

It belongs to the protein kinase superfamily. Tyr protein kinase family. In terms of assembly, heterodimer made of an alpha chain (50 kDa) and a beta chain (145 kDa) which are disulfide linked. Binds PLXNB1. Interacts when phosphorylated with downstream effectors including STAT3, PIK3R1, SRC, PCLG1, GRB2 and GAB1. Interacts with SPSB1, SPSB2 and SPSB4. Interacts with INPP5D/SHIP1. When phosphorylated at Tyr-1356, interacts with INPPL1/SHIP2. Interacts with RANBP9 and RANBP10, as well as SPSB1, SPSB2, SPSB3 and SPSB4. SPSB1 binding occurs in the presence and in the absence of HGF, however HGF treatment has a positive effect on this interaction. Interacts with MUC20; prevents interaction with GRB2 and suppresses hepatocyte growth factor-induced cell proliferation. Interacts with GRB10. Interacts with PTPN1 and PTPN2. Interacts with HSP90AA1 and HSP90AB1; the interaction suppresses MET kinase activity. Interacts with tensin TNS3. Interacts (when phosphorylated) with tensin TNS4 (via SH2 domain); the interaction increases MET protein stability by inhibiting MET endocytosis and subsequent lysosomal degradation. Post-translationally, autophosphorylated in response to ligand binding on Tyr-1234 and Tyr-1235 in the kinase domain leading to further phosphorylation of Tyr-1349 and Tyr-1356 in the C-terminal multifunctional docking site. Dephosphorylated by PTPRJ at Tyr-1349 and Tyr-1365. Dephosphorylated by PTPN1 and PTPN2. In terms of processing, ubiquitinated. Ubiquitination by CBL regulates the receptor stability and activity through proteasomal degradation. O-mannosylation of IPT/TIG domains by TMEM260 is required for protein maturation. O-mannosylated residues are composed of single mannose glycans that are not elongated or modified.

Its subcellular location is the membrane. The catalysed reaction is L-tyrosyl-[protein] + ATP = O-phospho-L-tyrosyl-[protein] + ADP + H(+). In terms of biological role, receptor tyrosine kinase that transduces signals from the extracellular matrix into the cytoplasm by binding to hepatocyte growth factor/HGF ligand. Regulates many physiological processes including proliferation, scattering, morphogenesis and survival. Ligand binding at the cell surface induces autophosphorylation of MET on its intracellular domain that provides docking sites for downstream signaling molecules. Following activation by ligand, interacts with the PI3-kinase subunit PIK3R1, PLCG1, SRC, GRB2, STAT3 or the adapter GAB1. Recruitment of these downstream effectors by MET leads to the activation of several signaling cascades including the RAS-ERK, PI3 kinase-AKT, or PLCgamma-PKC. The RAS-ERK activation is associated with the morphogenetic effects while PI3K/AKT coordinates prosurvival effects. During embryonic development, MET signaling plays a role in gastrulation, development and migration of muscles and neuronal precursors, angiogenesis and kidney formation. In adults, participates in wound healing as well as organ regeneration and tissue remodeling. Also promotes differentiation and proliferation of hematopoietic cells. In Callithrix jacchus (White-tufted-ear marmoset), this protein is Hepatocyte growth factor receptor (MET).